A 291-amino-acid polypeptide reads, in one-letter code: Isopentenyl-diphosphate Delta-isomerase I, chloroplastic (291 aa).

The transit peptide at 1–52 (MSTASLFSFPSFHLRSLLPSLSSSSSSSSSRFAPPRLSPIRSPAPRTQLSVR) directs the protein to the chloroplast. S2 bears the N-acetylthreonine mark. A compositionally biased stretch (low complexity) spans 20 to 39 (SLSSSSSSSSSRFAPPRLSP). The disordered stretch occupies residues 20-43 (SLSSSSSSSSSRFAPPRLSPIRSP). Residue K95 coordinates substrate. Residues H99 and H111 each coordinate Mg(2+). The Nudix hydrolase domain maps to 109 to 261 (LLHRAFSVFL…AVKLSPWFRL (153 aa)). Residues R130 and K134 each contribute to the substrate site. The active site involves C146. S147 contributes to the substrate binding site. Positions 147 to 177 (SHPLYRESELIEENVLGVRNAAQRKLFDELG) match the Nudix box motif. 2 residues coordinate Mg(2+): E206 and E208. E208 is a catalytic residue.

It belongs to the IPP isomerase type 1 family. Mg(2+) serves as cofactor.

Its subcellular location is the plastid. The protein resides in the chloroplast. It localises to the cytoplasm. The catalysed reaction is isopentenyl diphosphate = dimethylallyl diphosphate. Its pathway is isoprenoid biosynthesis; dimethylallyl diphosphate biosynthesis; dimethylallyl diphosphate from isopentenyl diphosphate: step 1/1. The protein operates within porphyrin-containing compound metabolism; chlorophyll biosynthesis. Catalyzes the 1,3-allylic rearrangement of the homoallylic substrate isopentenyl (IPP) to its highly electrophilic allylic isomer, dimethylallyl diphosphate (DMAPP). The protein is Isopentenyl-diphosphate Delta-isomerase I, chloroplastic (IPP1) of Arabidopsis thaliana (Mouse-ear cress).